A 487-amino-acid polypeptide reads, in one-letter code: WD-40 repeat-containing protein MSI5 (487 aa).

At M1 the chain carries N-acetylmethionine. Positions M1–T12 are enriched in low complexity. The disordered stretch occupies residues M1–F44. Positions P14–P21 match the Nuclear localization signal motif. WD repeat units lie at residues I142–A182, G197–G237, G270–M310, A315–V355, G364–E404, and G419–E466. A disordered region spans residues A236–Y268. Over residues G237–E252 the composition is skewed to polar residues. Residues F288–R303 carry the DWD box motif.

The protein belongs to the WD repeat RBAP46/RBAP48/MSI1 family. As to quaternary structure, interacts with AHL16. Interacts with LHP1, PDP2, PDP3 and PDP6. Component of the PRC2 (polycomb repressive complex 2) complex which regulates histone methylation on histone H3K27.

Its subcellular location is the nucleus. Functionally, core histone-binding subunit that may target chromatin assembly factors, chromatin remodeling factors and histone deacetylases to their histone substrates in a manner that is regulated by nucleosomal DNA. Acts together with PDP1 and MSI4/FVE to regulate the function of the PRC2 complex on FLC. The protein is WD-40 repeat-containing protein MSI5 of Arabidopsis thaliana (Mouse-ear cress).